A 319-amino-acid polypeptide reads, in one-letter code: Pantothenate kinase (319 aa).

97–104 (GSVAVGKS) is an ATP binding site.

Belongs to the prokaryotic pantothenate kinase family.

Its subcellular location is the cytoplasm. It carries out the reaction (R)-pantothenate + ATP = (R)-4'-phosphopantothenate + ADP + H(+). The protein operates within cofactor biosynthesis; coenzyme A biosynthesis; CoA from (R)-pantothenate: step 1/5. This is Pantothenate kinase from Mesorhizobium japonicum (strain LMG 29417 / CECT 9101 / MAFF 303099) (Mesorhizobium loti (strain MAFF 303099)).